We begin with the raw amino-acid sequence, 513 residues long: ATP synthase subunit alpha (513 aa).

169–176 provides a ligand contact to ATP; it reads GDRQCGKT.

Belongs to the ATPase alpha/beta chains family. In terms of assembly, F-type ATPases have 2 components, CF(1) - the catalytic core - and CF(0) - the membrane proton channel. CF(1) has five subunits: alpha(3), beta(3), gamma(1), delta(1), epsilon(1). CF(0) has three main subunits: a(1), b(2) and c(9-12). The alpha and beta chains form an alternating ring which encloses part of the gamma chain. CF(1) is attached to CF(0) by a central stalk formed by the gamma and epsilon chains, while a peripheral stalk is formed by the delta and b chains.

It localises to the cell inner membrane. The catalysed reaction is ATP + H2O + 4 H(+)(in) = ADP + phosphate + 5 H(+)(out). In terms of biological role, produces ATP from ADP in the presence of a proton gradient across the membrane. The alpha chain is a regulatory subunit. This chain is ATP synthase subunit alpha, found in Alteromonas mediterranea (strain DSM 17117 / CIP 110805 / LMG 28347 / Deep ecotype).